A 148-amino-acid polypeptide reads, in one-letter code: Lysozyme-like protein 6 (148 aa).

The N-terminal stretch at 1-19 (MTSPLLISLASCLVAVNQA) is a signal peptide. Positions 20-148 (SLIGRCDLAK…SYWMTGCHLA (129 aa)) constitute a C-type lysozyme domain. Cystine bridges form between cysteine 25–cysteine 145, cysteine 49–cysteine 133, cysteine 83–cysteine 98, and cysteine 94–cysteine 112. Active-site residues include glutamate 54 and aspartate 71.

Belongs to the glycosyl hydrolase 22 family. Monomer.

It localises to the secreted. The protein localises to the cell surface. The protein resides in the cell projection. It is found in the cilium. Its subcellular location is the flagellum. The enzyme catalyses Hydrolysis of (1-&gt;4)-beta-linkages between N-acetylmuramic acid and N-acetyl-D-glucosamine residues in a peptidoglycan and between N-acetyl-D-glucosamine residues in chitodextrins.. Its function is as follows. May be involved sperm-egg plasma membrane adhesion and fusion during fertilization. Exhibits bacteriolytic activity in vitro against Micrococcus luteus and Staphylococcus aureus. Shows weak bacteriolytic activity against Gram-positive bacteria at physiological pH. Bacteriolytic activity is pH-dependent, with a maximum at around pH 5.6. The chain is Lysozyme-like protein 6 (LYZL6) from Bos taurus (Bovine).